The sequence spans 882 residues: Alanine--tRNA ligase (882 aa).

Residues His568, His572, Cys670, and His674 each coordinate Zn(2+).

The protein belongs to the class-II aminoacyl-tRNA synthetase family. The cofactor is Zn(2+).

It localises to the cytoplasm. The catalysed reaction is tRNA(Ala) + L-alanine + ATP = L-alanyl-tRNA(Ala) + AMP + diphosphate. Catalyzes the attachment of alanine to tRNA(Ala) in a two-step reaction: alanine is first activated by ATP to form Ala-AMP and then transferred to the acceptor end of tRNA(Ala). Also edits incorrectly charged Ser-tRNA(Ala) and Gly-tRNA(Ala) via its editing domain. This chain is Alanine--tRNA ligase, found in Lactobacillus gasseri (strain ATCC 33323 / DSM 20243 / BCRC 14619 / CIP 102991 / JCM 1131 / KCTC 3163 / NCIMB 11718 / NCTC 13722 / AM63).